A 356-amino-acid polypeptide reads, in one-letter code: DNA polymerase IV (356 aa).

The UmuC domain occupies 6–187 (IIHVDMDYFF…LDIGDFPGVG (182 aa)). The Mg(2+) site is built by Asp10 and Asp105. Glu106 is a catalytic residue.

Belongs to the DNA polymerase type-Y family. In terms of assembly, monomer. Mg(2+) serves as cofactor.

It localises to the cytoplasm. The enzyme catalyses DNA(n) + a 2'-deoxyribonucleoside 5'-triphosphate = DNA(n+1) + diphosphate. Poorly processive, error-prone DNA polymerase involved in untargeted mutagenesis. Copies undamaged DNA at stalled replication forks, which arise in vivo from mismatched or misaligned primer ends. These misaligned primers can be extended by PolIV. Exhibits no 3'-5' exonuclease (proofreading) activity. May be involved in translesional synthesis, in conjunction with the beta clamp from PolIII. This is DNA polymerase IV from Staphylococcus saprophyticus subsp. saprophyticus (strain ATCC 15305 / DSM 20229 / NCIMB 8711 / NCTC 7292 / S-41).